Consider the following 207-residue polypeptide: Ankyrin repeat-containing protein P1E11.10 (207 aa).

ANK repeat units lie at residues asparagine 36–isoleucine 65 and aspartate 69–asparagine 98.

It localises to the cytoplasm. It is found in the nucleus. This chain is Ankyrin repeat-containing protein P1E11.10, found in Schizosaccharomyces pombe (strain 972 / ATCC 24843) (Fission yeast).